We begin with the raw amino-acid sequence, 692 residues long: Translation initiation factor IF-2 (692 aa).

Residues 51–114 (KAKPENAKKG…KPAETPGKIT (64 aa)) form a disordered region. Positions 59–84 (KGQNQKQSNNQQQNRQKQNQKNQSKP) are enriched in low complexity. Residues 85–94 (NKNKKQKGPK) are compositionally biased toward basic residues. The 170-residue stretch at 193 to 362 (ERPAVVTIMG…LLVSEVEELK (170 aa)) folds into the tr-type G domain. The G1 stretch occupies residues 202–209 (GHVDHGKT). GTP is bound at residue 202 to 209 (GHVDHGKT). Residues 227–231 (GITQH) form a G2 region. The interval 248 to 251 (DTPG) is G3. GTP is bound by residues 248–252 (DTPGH) and 302–305 (NKMD). The tract at residues 302-305 (NKMD) is G4. The G5 stretch occupies residues 338-340 (SAI).

It belongs to the TRAFAC class translation factor GTPase superfamily. Classic translation factor GTPase family. IF-2 subfamily.

Its subcellular location is the cytoplasm. Functionally, one of the essential components for the initiation of protein synthesis. Protects formylmethionyl-tRNA from spontaneous hydrolysis and promotes its binding to the 30S ribosomal subunits. Also involved in the hydrolysis of GTP during the formation of the 70S ribosomal complex. The polypeptide is Translation initiation factor IF-2 (Oceanobacillus iheyensis (strain DSM 14371 / CIP 107618 / JCM 11309 / KCTC 3954 / HTE831)).